The sequence spans 432 residues: D-amino acid dehydrogenase 1 (432 aa).

3 to 17 (VLVLGSGVIGTASAY) contacts FAD. The tract at residues 410–432 (GLDISRYSNSPENAKNAHPAPAH) is disordered.

This sequence belongs to the DadA oxidoreductase family. FAD serves as cofactor.

The catalysed reaction is a D-alpha-amino acid + A + H2O = a 2-oxocarboxylate + AH2 + NH4(+). Its pathway is amino-acid degradation; D-alanine degradation; NH(3) and pyruvate from D-alanine: step 1/1. In terms of biological role, catalyzes the oxidative deamination of D-amino acids. Has very broad substrate specificity; all the D-amino acids tested can be used as the substrate except D-Glu and D-Gln. Participates in the utilization of several D-amino acids as the sole source of nitrogen, i.e. D-alanine, D-histidine, D-phenylalanine, D-serine, D-threonine, and D-valine. The chain is D-amino acid dehydrogenase 1 (dadA1) from Pseudomonas aeruginosa (strain ATCC 15692 / DSM 22644 / CIP 104116 / JCM 14847 / LMG 12228 / 1C / PRS 101 / PAO1).